The chain runs to 289 residues: Phosphatidylserine decarboxylase proenzyme (289 aa).

Residues Asp-92, His-149, and Ser-254 each act as charge relay system; for autoendoproteolytic cleavage activity in the active site. Catalysis depends on Ser-254, which acts as the Schiff-base intermediate with substrate; via pyruvic acid; for decarboxylase activity. At Ser-254 the chain carries Pyruvic acid (Ser); by autocatalysis.

It belongs to the phosphatidylserine decarboxylase family. PSD-B subfamily. Prokaryotic type I sub-subfamily. Heterodimer of a large membrane-associated beta subunit and a small pyruvoyl-containing alpha subunit. The cofactor is pyruvate. Post-translationally, is synthesized initially as an inactive proenzyme. Formation of the active enzyme involves a self-maturation process in which the active site pyruvoyl group is generated from an internal serine residue via an autocatalytic post-translational modification. Two non-identical subunits are generated from the proenzyme in this reaction, and the pyruvate is formed at the N-terminus of the alpha chain, which is derived from the carboxyl end of the proenzyme. The autoendoproteolytic cleavage occurs by a canonical serine protease mechanism, in which the side chain hydroxyl group of the serine supplies its oxygen atom to form the C-terminus of the beta chain, while the remainder of the serine residue undergoes an oxidative deamination to produce ammonia and the pyruvoyl prosthetic group on the alpha chain. During this reaction, the Ser that is part of the protease active site of the proenzyme becomes the pyruvoyl prosthetic group, which constitutes an essential element of the active site of the mature decarboxylase.

It localises to the cell membrane. It carries out the reaction a 1,2-diacyl-sn-glycero-3-phospho-L-serine + H(+) = a 1,2-diacyl-sn-glycero-3-phosphoethanolamine + CO2. It functions in the pathway phospholipid metabolism; phosphatidylethanolamine biosynthesis; phosphatidylethanolamine from CDP-diacylglycerol: step 2/2. Functionally, catalyzes the formation of phosphatidylethanolamine (PtdEtn) from phosphatidylserine (PtdSer). This chain is Phosphatidylserine decarboxylase proenzyme, found in Pseudomonas aeruginosa (strain UCBPP-PA14).